Here is a 160-residue protein sequence, read N- to C-terminus: Transcription elongation factor GreA (160 aa).

Residues 2-81 adopt a coiled-coil conformation; sequence AEKKNILTYE…KNAEVVVEDE (80 aa). Residues 36-55 form a disordered region; sequence KEAREQGDLSENAEYDAAKD.

The protein belongs to the GreA/GreB family.

Necessary for efficient RNA polymerase transcription elongation past template-encoded arresting sites. The arresting sites in DNA have the property of trapping a certain fraction of elongating RNA polymerases that pass through, resulting in locked ternary complexes. Cleavage of the nascent transcript by cleavage factors such as GreA or GreB allows the resumption of elongation from the new 3'terminus. GreA releases sequences of 2 to 3 nucleotides. This chain is Transcription elongation factor GreA, found in Lachnoclostridium phytofermentans (strain ATCC 700394 / DSM 18823 / ISDg) (Clostridium phytofermentans).